We begin with the raw amino-acid sequence, 211 residues long: Ribosomal RNA large subunit methyltransferase E (211 aa).

Residues Gly-60, Trp-62, Asp-80, Asp-96, and Asp-121 each coordinate S-adenosyl-L-methionine. The active-site Proton acceptor is Lys-161.

It belongs to the class I-like SAM-binding methyltransferase superfamily. RNA methyltransferase RlmE family.

It localises to the cytoplasm. It catalyses the reaction uridine(2552) in 23S rRNA + S-adenosyl-L-methionine = 2'-O-methyluridine(2552) in 23S rRNA + S-adenosyl-L-homocysteine + H(+). Its function is as follows. Specifically methylates the uridine in position 2552 of 23S rRNA at the 2'-O position of the ribose in the fully assembled 50S ribosomal subunit. In Cellvibrio japonicus (strain Ueda107) (Pseudomonas fluorescens subsp. cellulosa), this protein is Ribosomal RNA large subunit methyltransferase E.